Consider the following 462-residue polypeptide: NAD-capped RNA hydrolase NUDT12 (462 aa).

The residue at position 10 (lysine 10) is an N6-succinyllysine. 3 ANK repeats span residues glutamate 11–asparagine 40, asparagine 45–leucine 74, and alanine 78–leucine 98. At lysine 185 the chain carries N6-succinyllysine. Positions 284 and 287 each coordinate Zn(2+). Lysine 292 is modified (N6-succinyllysine). 2 residues coordinate Zn(2+): cysteine 302 and cysteine 307. Residues tyrosine 318, alanine 354–phenylalanine 356, glutamate 370, glutamate 374, and glutamate 415 each bind substrate. The region spanning proline 319–lysine 453 is the Nudix hydrolase domain. 4 residues coordinate Mg(2+): alanine 354, glutamate 370, glutamate 374, and glutamate 415. The Nudix box signature appears at glycine 355–glycine 376. Residues proline 460–leucine 462 carry the Microbody targeting signal motif.

It belongs to the Nudix hydrolase family. NudC subfamily. Homodimer. Homodimerization is essential for its catalytic activity and protein stability. Interacts (via ANK repeats) with BLMH. Requires Mg(2+) as cofactor. Zn(2+) is required as a cofactor. In terms of tissue distribution, expressed abundantly in the liver and kidney.

It localises to the cytoplasm. The protein resides in the peroxisome. The protein localises to the cytoplasmic granule. It catalyses the reaction a 5'-end NAD(+)-phospho-ribonucleoside in mRNA + H2O = a 5'-end phospho-adenosine-phospho-ribonucleoside in mRNA + beta-nicotinamide D-ribonucleotide + 2 H(+). The catalysed reaction is NAD(+) + H2O = beta-nicotinamide D-ribonucleotide + AMP + 2 H(+). It carries out the reaction NADH + H2O = reduced beta-nicotinamide D-ribonucleotide + AMP + 2 H(+). The enzyme catalyses NADPH + H2O = reduced beta-nicotinamide D-ribonucleotide + adenosine 2',5'-bisphosphate + 2 H(+). MRNA decapping enzyme that specifically removes the nicotinamide adenine dinucleotide (NAD) cap from a subset of mRNAs by hydrolyzing the diphosphate linkage to produce nicotinamide mononucleotide (NMN) and 5' monophosphate mRNA. The NAD-cap is present at the 5'-end of some RNAs; in contrast to the canonical N7 methylguanosine (m7G) cap, the NAD cap promotes mRNA decay. Preferentially acts on NAD-capped transcripts in response to nutrient stress. Also acts on free nicotinamide adenine dinucleotide molecules: hydrolyzes NAD(H) into NMN(H) and AMP, and NADPH into NMNH and 2',5'-ADP. May act to regulate the concentration of peroxisomal nicotinamide nucleotide cofactors required for oxidative metabolism in this organelle. Regulates the levels of circadian clock components PER1, PER2, PER3 and CRY2 in the liver. The chain is NAD-capped RNA hydrolase NUDT12 from Mus musculus (Mouse).